We begin with the raw amino-acid sequence, 442 residues long: F-box only protein 39 (442 aa).

An F-box domain is found at 16 to 61 (WAFLPDLCLCRVFWWLGDRDRSRAALVCRKWNQMMYSAELWRYRTI).

In terms of assembly, directly interacts with SKP1 and CUL1.

In terms of biological role, substrate-recognition component of the SCF (SKP1-CUL1-F-box protein)-type E3 ubiquitin ligase complex. This Homo sapiens (Human) protein is F-box only protein 39 (FBXO39).